The sequence spans 640 residues: 5-aminolevulinate synthase, non-specific, mitochondrial (640 aa).

The transit peptide at 1-56 (METVVRSCPFLSRVPQAFLQKAGKSLLFYAQNCPKMMEVGAKPAPRALSTAAVHYQ) directs the protein to the mitochondrion. 2 disordered regions span residues 60 to 103 (ETPP…TSQG) and 143 to 163 (EVAE…GGDP). Over residues 75-92 (VQQTPDGSQQSPDGTQLP) the composition is skewed to polar residues. Substrate-binding residues include Arg217, Ser334, and Lys353. Ser386, His414, and Thr442 together coordinate pyridoxal 5'-phosphate. Residue Lys445 is part of the active site. Lys445 carries the post-translational modification N6-(pyridoxal phosphate)lysine. Residues Thr474 and Thr475 each contribute to the pyridoxal 5'-phosphate site. Thr562 contributes to the substrate binding site. Hydroxyproline is present on Pro576.

The protein belongs to the class-II pyridoxal-phosphate-dependent aminotransferase family. As to quaternary structure, homodimer. Interacts (hydroxylated form) with VHL. Requires pyridoxal 5'-phosphate as cofactor. In terms of processing, in normoxia, is hydroxylated at Pro-576, promoting interaction with VHL, initiating ubiquitination and subsequent degradation via the proteasome. Ubiquitinated; in normoxia following hydroxylation and interaction with VHL, leading to its subsequent degradation via the proteasome.

It is found in the mitochondrion inner membrane. The enzyme catalyses succinyl-CoA + glycine + H(+) = 5-aminolevulinate + CO2 + CoA. It participates in porphyrin-containing compound metabolism; protoporphyrin-IX biosynthesis; 5-aminolevulinate from glycine: step 1/1. Catalyzes the pyridoxal 5'-phosphate (PLP)-dependent condensation of succinyl-CoA and glycine to form aminolevulinic acid (ALA), with CoA and CO2 as by-products. This is 5-aminolevulinate synthase, non-specific, mitochondrial (ALAS1) from Pongo abelii (Sumatran orangutan).